The primary structure comprises 469 residues: Adenosylhomocysteinase (469 aa).

Residues threonine 58, aspartate 133, and glutamate 195 each coordinate substrate. Residue 196–198 (TTT) coordinates NAD(+). Substrate-binding residues include lysine 225 and aspartate 229. NAD(+) contacts are provided by residues asparagine 230, 259–264 (GFGDVG), glutamate 282, asparagine 317, 338–340 (IGH), and asparagine 383.

The protein belongs to the adenosylhomocysteinase family. NAD(+) serves as cofactor.

The protein resides in the cytoplasm. The enzyme catalyses S-adenosyl-L-homocysteine + H2O = L-homocysteine + adenosine. The protein operates within amino-acid biosynthesis; L-homocysteine biosynthesis; L-homocysteine from S-adenosyl-L-homocysteine: step 1/1. In terms of biological role, may play a key role in the regulation of the intracellular concentration of adenosylhomocysteine. The polypeptide is Adenosylhomocysteinase (Rhodopseudomonas palustris (strain TIE-1)).